We begin with the raw amino-acid sequence, 149 residues long: Transcriptional repressor NrdR (149 aa).

The segment at 3-34 (CPFCSATDTKVIDSRLVADGHQVRRRRECAEC) is a zinc-finger region. Positions 49-139 (PRVVKQDGSR…VYRAFEDVSE (91 aa)) constitute an ATP-cone domain.

This sequence belongs to the NrdR family. It depends on Zn(2+) as a cofactor.

Negatively regulates transcription of bacterial ribonucleotide reductase nrd genes and operons by binding to NrdR-boxes. In Shewanella woodyi (strain ATCC 51908 / MS32), this protein is Transcriptional repressor NrdR.